The chain runs to 90 residues: Small ribosomal subunit protein bS20 (90 aa).

Basic residues predominate over residues Met-1–Lys-15. The tract at residues Met-1 to Arg-22 is disordered.

Belongs to the bacterial ribosomal protein bS20 family.

Its function is as follows. Binds directly to 16S ribosomal RNA. The chain is Small ribosomal subunit protein bS20 from Helicobacter hepaticus (strain ATCC 51449 / 3B1).